Consider the following 107-residue polypeptide: Magnetosome protein MmsF (107 aa).

Residues 1–13 (MTEAILRSTLGAR) are Cytoplasmic-facing. A helical transmembrane segment spans residues 14–34 (TTVMAALSYLSVLCFVPLLVD). At 35–46 (RDDEFVYFHAKQ) the chain is on the lumenal side. Residues 47-67 (GLVIWMWGVLALFALHVPVLG) traverse the membrane as a helical segment. Topologically, residues 68–69 (KW) are cytoplasmic. A helical transmembrane segment spans residues 70-90 (IFGFSSMGVLVFSLLGLVSVV). At 91–107 (FQRAWKLPLISWVAHRI) the chain is on the lumenal side.

Belongs to the magnetosome MamF/MmsF protein family. As to quaternary structure, may oligomerize.

It localises to the magnetosome membrane. Its activity is regulated as follows. Its function may be negatively regulated by one of the MamGFDC proteins. Plays a major role in synthesis of cubooctahedral magnetite crystals by controlling crystal growth and morphology after nucleation. Has a partially redundant function with MamF. When overexpressed in E.coli the soluble protein self assembles into shells of about 36 nm. This protein mediates the formation of magnetite nanoparticles from a solution of Fe(2+) and Fe(3+) sulfate; the crystals are larger and lack alternative iron oxide/oxyhydroxide species seen in the protein's absence. In Paramagnetospirillum magneticum (strain ATCC 700264 / AMB-1) (Magnetospirillum magneticum), this protein is Magnetosome protein MmsF.